Consider the following 401-residue polypeptide: UPF0242 protein CCA_01002 (401 aa).

It belongs to the UPF0242 family.

The sequence is that of UPF0242 protein CCA_01002 from Chlamydia caviae (strain ATCC VR-813 / DSM 19441 / 03DC25 / GPIC) (Chlamydophila caviae).